Consider the following 255-residue polypeptide: Adenylate dimethylallyltransferase (255 aa).

The protein belongs to the isopentenyl transferase family.

The catalysed reaction is dimethylallyl diphosphate + AMP = N(6)-(dimethylallyl)adenosine 5'-phosphate + diphosphate. Transfers dimethylallyl groups to AMP as part of the biosynthesis of cytokinin phytohormones. This Rhodococcoides fascians (Rhodococcus fascians) protein is Adenylate dimethylallyltransferase (fas4).